The primary structure comprises 250 residues: Triosephosphate isomerase (250 aa).

9 to 11 (NWK) is a binding site for substrate. The active-site Electrophile is His100. The active-site Proton acceptor is Glu169. Substrate contacts are provided by residues Gly175, Ser208, and 229 to 230 (GG).

It belongs to the triosephosphate isomerase family. In terms of assembly, homodimer.

It localises to the cytoplasm. It catalyses the reaction D-glyceraldehyde 3-phosphate = dihydroxyacetone phosphate. It participates in carbohydrate biosynthesis; gluconeogenesis. Its pathway is carbohydrate degradation; glycolysis; D-glyceraldehyde 3-phosphate from glycerone phosphate: step 1/1. In terms of biological role, involved in the gluconeogenesis. Catalyzes stereospecifically the conversion of dihydroxyacetone phosphate (DHAP) to D-glyceraldehyde-3-phosphate (G3P). This Synechococcus sp. (strain JA-2-3B'a(2-13)) (Cyanobacteria bacterium Yellowstone B-Prime) protein is Triosephosphate isomerase.